The sequence spans 279 residues: Cytochrome c1 (279 aa).

The first 21 residues, 1–21 (MKKLLISAVSALVLGSGAAFA), serve as a signal peptide directing secretion. 4 residues coordinate heme c: cysteine 55, cysteine 58, histidine 59, and methionine 204. Residues 248–266 (MGLVAMVMLGLLSVMLYLT) form a helical membrane-spanning segment.

The main subunits of complex b-c1 are: cytochrome b, cytochrome c1 and the Rieske protein. Binds 1 heme c group covalently per subunit.

It localises to the cell membrane. In terms of biological role, component of the ubiquinol-cytochrome c reductase complex (complex III or cytochrome b-c1 complex), which is a respiratory chain that generates an electrochemical potential coupled to ATP synthesis. c1 functions as an electron donor to cytochrome c. The sequence is that of Cytochrome c1 (petC) from Rhodobacter capsulatus (strain ATCC BAA-309 / NBRC 16581 / SB1003).